A 155-amino-acid chain; its full sequence is Small ribosomal subunit protein uS7cz/uS7cy (155 aa).

The protein belongs to the universal ribosomal protein uS7 family. Part of the 30S ribosomal subunit.

The protein localises to the plastid. Its subcellular location is the chloroplast. Its function is as follows. One of the primary rRNA binding proteins, it binds directly to 16S rRNA where it nucleates assembly of the head domain of the 30S subunit. This Cucumis sativus (Cucumber) protein is Small ribosomal subunit protein uS7cz/uS7cy (rps7-A).